The sequence spans 459 residues: Trigger factor (459 aa).

One can recognise a PPIase FKBP-type domain in the interval 166-245; sequence GDFANIDLTA…VNSVKAEELP (80 aa).

The protein belongs to the FKBP-type PPIase family. Tig subfamily.

The protein resides in the cytoplasm. The catalysed reaction is [protein]-peptidylproline (omega=180) = [protein]-peptidylproline (omega=0). In terms of biological role, involved in protein export. Acts as a chaperone by maintaining the newly synthesized protein in an open conformation. Functions as a peptidyl-prolyl cis-trans isomerase. The polypeptide is Trigger factor (Bifidobacterium longum (strain NCC 2705)).